The following is a 197-amino-acid chain: Putative manganese efflux pump MntP (197 aa).

Helical transmembrane passes span 8-28 (VILL…GLGA), 43-63 (VYAA…GYLL), 66-86 (VLLG…LIVL), 123-143 (LAIA…LLAL), 146-166 (WLAC…GIYL), and 177-197 (KAEI…MLFS).

The protein belongs to the MntP (TC 9.B.29) family.

It is found in the cell inner membrane. Its function is as follows. Probably functions as a manganese efflux pump. In Psychrobacter arcticus (strain DSM 17307 / VKM B-2377 / 273-4), this protein is Putative manganese efflux pump MntP.